The chain runs to 177 residues: ATP synthase subunit delta (177 aa).

The protein belongs to the ATPase delta chain family. F-type ATPases have 2 components, F(1) - the catalytic core - and F(0) - the membrane proton channel. F(1) has five subunits: alpha(3), beta(3), gamma(1), delta(1), epsilon(1). F(0) has three main subunits: a(1), b(2) and c(10-14). The alpha and beta chains form an alternating ring which encloses part of the gamma chain. F(1) is attached to F(0) by a central stalk formed by the gamma and epsilon chains, while a peripheral stalk is formed by the delta and b chains.

The protein localises to the cell inner membrane. F(1)F(0) ATP synthase produces ATP from ADP in the presence of a proton or sodium gradient. F-type ATPases consist of two structural domains, F(1) containing the extramembraneous catalytic core and F(0) containing the membrane proton channel, linked together by a central stalk and a peripheral stalk. During catalysis, ATP synthesis in the catalytic domain of F(1) is coupled via a rotary mechanism of the central stalk subunits to proton translocation. Its function is as follows. This protein is part of the stalk that links CF(0) to CF(1). It either transmits conformational changes from CF(0) to CF(1) or is implicated in proton conduction. This Citrobacter koseri (strain ATCC BAA-895 / CDC 4225-83 / SGSC4696) protein is ATP synthase subunit delta.